The following is a 400-amino-acid chain: DNA alpha-glucosyltransferase (400 aa).

Interacts with clamp protein gp45.

The catalysed reaction is Transfers an alpha-D-glucosyl residue from UDP-glucose to a hydroxymethylcytosine residue in DNA.. It participates in genetic information processing; DNA modification. Its function is as follows. Catalyzes the transfer of glucose from uridine diphosphoglucose to 5-hydroxymethyl cytosine of T4 DNA to yield glucosyl 5-hydroxymethyl cytosine (glc-HMC). This DNA process seems to occur immediately after DNA synthesis since the DNA alpha-glucosyltransferase interacts with the clamp protein gp45. The glc-HMC modification protects the phage genome against its own nucleases and the host restriction endonuclease system. The glc-HMC modification also protects against the host CRISPR-Cas9 defense system. In Escherichia coli (Bacteriophage T4), this protein is DNA alpha-glucosyltransferase (agt).